The primary structure comprises 658 residues: CXXC-type zinc finger protein 1 (658 aa).

M1 is subject to N-acetylmethionine. Residues M1 to G14 are compositionally biased toward acidic residues. The disordered stretch occupies residues M1–E20. Residues S6 and S19 each carry the phosphoserine modification. Residues Y28–K76 form a PHD-type zinc finger. The segment at Y84–I164 is disordered. A compositionally biased stretch (basic and acidic residues) spans R90–R120. The segment covering Q153 to Q163 has biased composition (low complexity). The segment at Q162 to Q211 adopts a CXXC-type zinc-finger fold. Zn(2+)-binding residues include C171, C174, C177, C183, C186, C189, C205, and C210. Disordered regions lie at residues F221–D285 and V327–S373. A Phosphoserine modification is found at S226. T229 carries the post-translational modification Phosphothreonine. K252 is covalently cross-linked (Glycyl lysine isopeptide (Lys-Gly) (interchain with G-Cter in SUMO2)). The span at V327–E336 shows a compositional bias: basic residues. Residues K337 to Y347 show a composition bias toward basic and acidic residues. The span at K348–W360 shows a compositional bias: basic residues. Over residues K361–D370 the composition is skewed to basic and acidic residues. The stretch at G428 to E470 forms a coiled coil.

Component of the SET1 complex, at least composed of the catalytic subunit (SETD1A or SETD1B), WDR5, WDR82, RBBP5, ASH2L/ASH2, CXXC1/CFP1, HCFC1 and DPY30. Interacts with SETD1A. Interacts with ZNF335. Interacts with PRDM9; this interaction does not link PRDM9-activated recombination hotspot sites with DSB machinery and is not required for the hotspot recognition pathway. Interacts with histone H3K4me3. May be regulated by proteolysis.

The protein localises to the nucleus speckle. It is found in the nucleus. In terms of biological role, transcriptional activator that exhibits a unique DNA binding specificity for CpG unmethylated motifs with a preference for CpGG. The sequence is that of CXXC-type zinc finger protein 1 (CXXC1) from Bos taurus (Bovine).